A 344-amino-acid polypeptide reads, in one-letter code: Dimethyladenosine transferase 1, mitochondrial (344 aa).

The transit peptide at Met-1–Leu-27 directs the protein to the mitochondrion. Residues Asn-36, Leu-38, Gly-63, Glu-85, Lys-86, Asp-111, Ile-112, and Asn-141 each coordinate S-adenosyl-L-methionine.

This sequence belongs to the class I-like SAM-binding methyltransferase superfamily. rRNA adenine N(6)-methyltransferase family. KsgA subfamily.

Its subcellular location is the mitochondrion. The catalysed reaction is adenosine(N)/adenosine(N+1) in rRNA + 4 S-adenosyl-L-methionine = N(6)-dimethyladenosine(N)/N(6)-dimethyladenosine(N+1) in rRNA + 4 S-adenosyl-L-homocysteine + 4 H(+). Its function is as follows. Mitochondrial methyltransferase which uses S-adenosyl methionine to dimethylate two highly conserved adjacent adenosine residues (A1583 and A1584) within the loop of helix 45 at the 3-prime end of 12S rRNA, thereby regulating the assembly or stability of the small subunit of the mitochondrial ribosome. Also required for basal transcription of mitochondrial DNA, probably via its interaction with POLRMT and TFAM. Stimulates transcription independently of the methyltransferase activity. This Xenopus laevis (African clawed frog) protein is Dimethyladenosine transferase 1, mitochondrial (tfb1m.L).